The following is a 253-amino-acid chain: Thiamine import ATP-binding protein ThiQ (253 aa).

Residues 8–236 form the ABC transporter domain; the sequence is VRLDKVSFSY…AGPEAFRRYI (229 aa). 38-45 contacts ATP; it reads GPSGSGKS.

Belongs to the ABC transporter superfamily. Thiamine importer (TC 3.A.1.19.1) family. In terms of assembly, the complex is composed of two ATP-binding proteins (ThiQ), two transmembrane proteins (ThiP) and a solute-binding protein (ThiB).

It is found in the cell inner membrane. It catalyses the reaction thiamine(out) + ATP + H2O = thiamine(in) + ADP + phosphate + H(+). In terms of biological role, part of the ABC transporter complex ThiBPQ involved in thiamine import. Responsible for energy coupling to the transport system. This Mesorhizobium japonicum (strain LMG 29417 / CECT 9101 / MAFF 303099) (Mesorhizobium loti (strain MAFF 303099)) protein is Thiamine import ATP-binding protein ThiQ.